A 230-amino-acid chain; its full sequence is Complex I assembly factor TMEM126B, mitochondrial (230 aa).

Position 34 is a phosphoserine (S34). Transmembrane regions (helical) follow at residues 72–92, 110–130, 141–161, and 199–219; these read IYQM…SNFL, LATL…IDAL, VFRS…SLAF, and IPLV…YAVF.

The protein belongs to the TMEM126 family. In terms of assembly, part of the mitochondrial complex I assembly/MCIA complex that comprises at least the core subunits TMEM126B, NDUFAF1, ECSIT and ACAD9 and complement subunits such as COA1 and TMEM186. Associates with the intermediate 370 kDa subcomplex of incompletely assembled complex I. Interacts with TMEM70.

It is found in the mitochondrion membrane. In terms of biological role, as part of the MCIA complex, involved in the assembly of the mitochondrial complex I. Participates in constructing the membrane arm of complex I. This chain is Complex I assembly factor TMEM126B, mitochondrial, found in Homo sapiens (Human).